The sequence spans 419 residues: Serine--tRNA ligase (419 aa).

Residue 226 to 228 participates in L-serine binding; sequence TSE. Residues 257–259 and V273 each bind ATP; that span reads RRE. E280 is an L-serine binding site. 344–347 contributes to the ATP binding site; that stretch reads ELTS. T379 provides a ligand contact to L-serine.

It belongs to the class-II aminoacyl-tRNA synthetase family. Type-1 seryl-tRNA synthetase subfamily. In terms of assembly, homodimer. The tRNA molecule binds across the dimer.

It localises to the cytoplasm. It carries out the reaction tRNA(Ser) + L-serine + ATP = L-seryl-tRNA(Ser) + AMP + diphosphate + H(+). The catalysed reaction is tRNA(Sec) + L-serine + ATP = L-seryl-tRNA(Sec) + AMP + diphosphate + H(+). It functions in the pathway aminoacyl-tRNA biosynthesis; selenocysteinyl-tRNA(Sec) biosynthesis; L-seryl-tRNA(Sec) from L-serine and tRNA(Sec): step 1/1. Catalyzes the attachment of serine to tRNA(Ser). Is also able to aminoacylate tRNA(Sec) with serine, to form the misacylated tRNA L-seryl-tRNA(Sec), which will be further converted into selenocysteinyl-tRNA(Sec). In Corynebacterium diphtheriae (strain ATCC 700971 / NCTC 13129 / Biotype gravis), this protein is Serine--tRNA ligase.